We begin with the raw amino-acid sequence, 344 residues long: tRNA(Ile)-lysidine synthase (344 aa).

S35–S40 contributes to the ATP binding site.

The protein belongs to the tRNA(Ile)-lysidine synthase family.

It localises to the cytoplasm. It catalyses the reaction cytidine(34) in tRNA(Ile2) + L-lysine + ATP = lysidine(34) in tRNA(Ile2) + AMP + diphosphate + H(+). In terms of biological role, ligates lysine onto the cytidine present at position 34 of the AUA codon-specific tRNA(Ile) that contains the anticodon CAU, in an ATP-dependent manner. Cytidine is converted to lysidine, thus changing the amino acid specificity of the tRNA from methionine to isoleucine. The chain is tRNA(Ile)-lysidine synthase from Methylobacterium sp. (strain 4-46).